A 77-amino-acid chain; its full sequence is Acyl carrier protein (77 aa).

Positions 2-77 constitute a Carrier domain; sequence SDVAERVKKI…DAIDFITANS (76 aa). Position 37 is an O-(pantetheine 4'-phosphoryl)serine (S37).

The protein belongs to the acyl carrier protein (ACP) family. 4'-phosphopantetheine is transferred from CoA to a specific serine of apo-ACP by AcpS. This modification is essential for activity because fatty acids are bound in thioester linkage to the sulfhydryl of the prosthetic group.

Its subcellular location is the cytoplasm. Its pathway is lipid metabolism; fatty acid biosynthesis. Its function is as follows. Carrier of the growing fatty acid chain in fatty acid biosynthesis. In Paramagnetospirillum magneticum (strain ATCC 700264 / AMB-1) (Magnetospirillum magneticum), this protein is Acyl carrier protein.